A 117-amino-acid chain; its full sequence is MKFQYKEDHPFEYRKKEGEKIRKKYPDRVPVIVEKAPKARVPDLDKRKYLVPSDLTVGQFYFLIRKRIHLRPEDALFFFVNNTIPPTSATMGQLYEDNHEEDYFLYVAYSDESVYGK.

A lipid anchor (Phosphatidylethanolamine amidated glycine; alternate) is attached at Gly116. Residue Gly116 is the site of Phosphatidylserine amidated glycine; alternate attachment. Lys117 is a propeptide (removed in mature form).

This sequence belongs to the ATG8 family. In terms of assembly, interacts with ATG13, OPRK1, RB1CC1 and ULK1. Interacts with TP53INP1 and TP53INP2. Directly interacts with SQSTM1. Interacts with ATG3, ATG7 and MAP15. Interacts with TECPR2. Interacts with TBC1D5. Interacts with MAPK15. Interacts with TRIM5. Interacts with MEFV and TRIM21. Interacts with WDFY3. Interacts with the reticulophagy receptor TEX264. Interacts with UBA5. Interacts with KBTBD6 and KBTBD7; the interaction is direct. Interacts with reticulophagy regulators RETREG1, RETREG2 and RETREG3. Interacts with IRGM. Interacts with DNM2. Interacts with NCOA4 (via C-terminus). Post-translationally, the precursor molecule is cleaved by ATG4 (ATG4A, ATG4B, ATG4C or ATG4D) to expose the glycine at the C-terminus and form the cytosolic form, GABARAPL1-I. The processed form is then activated by APG7L/ATG7, transferred to ATG3 and conjugated to phosphatidylethanolamine (PE) phospholipid to form the membrane-bound form, GABARAPL1-II. During non-canonical autophagy, the processed form is conjugated to phosphatidylserine (PS) phospholipid. ATG4 proteins also mediate the delipidation of PE-conjugated forms required for GABARAPL1 recycling when autophagosomes fuse with lysosomes. In addition, ATG4B and ATG4D mediate delipidation of ATG8 proteins conjugated to PS during non-canonical autophagy. ATG4B constitutes the major protein for proteolytic activation. ATG4D is the main enzyme for delipidation activity.

Its subcellular location is the cytoplasmic vesicle. It localises to the autophagosome. The protein localises to the cytoplasmic vesicle membrane. It is found in the cytoplasm. The protein resides in the cytoskeleton. Its subcellular location is the endoplasmic reticulum. It localises to the golgi apparatus. Functionally, ubiquitin-like modifier that increases cell-surface expression of kappa-type opioid receptor through facilitating anterograde intracellular trafficking of the receptor. Involved in formation of autophagosomal vacuoles. While LC3s are involved in elongation of the phagophore membrane, the GABARAP/GATE-16 subfamily is essential for a later stage in autophagosome maturation. Through its interaction with the reticulophagy receptor TEX264, participates in the remodeling of subdomains of the endoplasmic reticulum into autophagosomes upon nutrient stress, which then fuse with lysosomes for endoplasmic reticulum turnover. This chain is Gamma-aminobutyric acid receptor-associated protein-like 1, found in Bos taurus (Bovine).